The primary structure comprises 659 residues: Polyamine transporter 4 (659 aa).

2 stretches are compositionally biased toward polar residues: residues 1-20 and 28-45; these read MPSSLTKTESNSDPRTNIQQ and NVTNSGNLDSTSSSTGSI. Positions 1-81 are disordered; it reads MPSSLTKTES…LDWDGPDDPD (81 aa). Residues 1-99 are Cytoplasmic-facing; it reads MPSSLTKTES…KKWYTTMTSA (99 aa). A helical transmembrane segment spans residues 100–120; that stretch reads FLCLVVTMGSSLYVSSVPELV. The Extracellular segment spans residues 121–128; it reads ERYHVSQT. The helical transmembrane segment at 129-149 threads the bilayer; sequence LALAGLTFYLLGLSTVIGAPL. Residues 150-157 lie on the Cytoplasmic side of the membrane; sequence SEVFGRKP. Residues 158-178 traverse the membrane as a helical segment; sequence VYLFSLPVSMLFTMGVGLSNG. Topologically, residues 179 to 187 are extracellular; that stretch reads HMRIILPLR. The helical transmembrane segment at 188-208 threads the bilayer; that stretch reads FLSGVFASPALSVGSGTILDI. The Cytoplasmic portion of the chain corresponds to 209–215; the sequence is FDVDQVS. The chain crosses the membrane as a helical span at residues 216–236; it reads VAMTYFVLSPFLGPVLSPIMA. Topologically, residues 237 to 246 are extracellular; the sequence is GFATEAKGWR. A helical membrane pass occupies residues 247 to 267; it reads WSEWIQLIAGGLILPFIALMP. The Cytoplasmic segment spans residues 268 to 316; sequence ETHKGIILRKRAKKRNIALKKFSREAQKEFLKTTVTITILRPLKMLVVE. Residues 317-337 traverse the membrane as a helical segment; it reads PIVFVFSVYVAFIFAILFGFF. Residues 338–355 are Extracellular-facing; it reads EAYAVIYRGVYHMSMGIS. A helical membrane pass occupies residues 356–376; sequence GLPFIGIGVGLWIGAFFYLYI. Residues 377-423 are Cytoplasmic-facing; it reads DRKYLFPKPPAGTQPLTEKERTSKRTTPYRGARDAETGELLPVVPEK. A disordered region spans residues 387 to 408; sequence AGTQPLTEKERTSKRTTPYRGA. The chain crosses the membrane as a helical span at residues 424–444; sequence FLIACKFGSVALPIGLFWQAW. Over 445 to 456 the chain is Extracellular; sequence TARSDVHWMAPV. Residues 457–477 traverse the membrane as a helical segment; it reads AAGVPFGFGLILIFFSVLMYF. Residues 478–486 lie on the Cytoplasmic side of the membrane; that stretch reads STCYPPLTV. A helical membrane pass occupies residues 487–509; sequence ASCLAANNLLRYVMSSVFPLFTI. Over 510–518 the chain is Extracellular; the sequence is QMYTKMKIK. The helical transmembrane segment at 519 to 539 threads the bilayer; that stretch reads WASTLFALVCVVMIPIPWVFE. The Cytoplasmic portion of the chain corresponds to 540 to 659; sequence KWGSKLRHKS…MATDASARMV (120 aa). Over residues 587–602 the composition is skewed to basic and acidic residues; that stretch reads METDPSTREKPGERLS. Positions 587–631 are disordered; sequence METDPSTREKPGERLSLRRTHTQPVPASFDREDGQHAQNRNEPIS. A phosphothreonine mark is found at threonine 589, threonine 606, and threonine 608. The span at 622-631 shows a compositional bias: polar residues; the sequence is HAQNRNEPIS. Serine 633 and serine 646 each carry phosphoserine.

This sequence belongs to the major facilitator superfamily. DHA1 family. Polyamines/proton antiporter (TC 2.A.1.2.16) subfamily.

Its subcellular location is the cell membrane. In terms of biological role, cell membrane polyamine/proton antiporter, involved in the detoxification of excess polyamines in the cytoplasm. Recognizes spermidine, spermine and the antimalarial drug quinidine, but not quinine, chloroquine and mefloquine. This chain is Polyamine transporter 4 (TPO4), found in Saccharomyces cerevisiae (strain ATCC 204508 / S288c) (Baker's yeast).